Reading from the N-terminus, the 358-residue chain is Nicotinate-nucleotide--dimethylbenzimidazole phosphoribosyltransferase (358 aa).

Glu-314 serves as the catalytic Proton acceptor.

This sequence belongs to the CobT family.

It catalyses the reaction 5,6-dimethylbenzimidazole + nicotinate beta-D-ribonucleotide = alpha-ribazole 5'-phosphate + nicotinate + H(+). It functions in the pathway nucleoside biosynthesis; alpha-ribazole biosynthesis; alpha-ribazole from 5,6-dimethylbenzimidazole: step 1/2. Catalyzes the synthesis of alpha-ribazole-5'-phosphate from nicotinate mononucleotide (NAMN) and 5,6-dimethylbenzimidazole (DMB). This chain is Nicotinate-nucleotide--dimethylbenzimidazole phosphoribosyltransferase, found in Mycobacterium marinum (strain ATCC BAA-535 / M).